Here is an 861-residue protein sequence, read N- to C-terminus: E3 ubiquitin-protein ligase SH3RF1 (861 aa).

An RING-type zinc finger spans residues 12 to 53 (CPVCLERLDASAKVLPCQHTFCKRCLLGIVSSRNELRCPECR). SH3 domains follow at residues 132–191 (PQLP…IIKP) and 194–257 (QPPP…FNSA). Residues 268 to 319 (SGVDTGEGSSGTTHSSNSQKQADAKKNTKKRHSFTSLTMSNKSSQSVQNRHS) are disordered. The span at 273-285 (GEGSSGTTHSSNS) shows a compositional bias: low complexity. A compositionally biased stretch (polar residues) spans 301-317 (FTSLTMSNKSSQSVQNR). Residues 435-496 (TRPSVFVAIY…PGNYVAPVTR (62 aa)) enclose the SH3 3 domain. Positions 684-731 (NSAANKQDKDSKKEKKGLLKLLSGASTKRKPRSSPPHSPTQELEQTNS) are disordered. The span at 689-700 (KQDKDSKKEKKG) shows a compositional bias: basic and acidic residues. The 60-residue stretch at 802–861 (RPCERYRVVVSYPPQSEAELELKEGDIVFVHKKREDGWFKGTLQRNGKTGLFPGSFVENI) folds into the SH3 4 domain.

This sequence belongs to the SH3RF family. In terms of processing, autoubiquitinated. Ubiquitinated by SH3RF2, leading to proteasome-mediated degradation.

Its subcellular location is the cytoplasm. The protein resides in the perinuclear region. The protein localises to the cell projection. It is found in the lamellipodium. It localises to the golgi apparatus. Its subcellular location is the trans-Golgi network. It carries out the reaction S-ubiquitinyl-[E2 ubiquitin-conjugating enzyme]-L-cysteine + [acceptor protein]-L-lysine = [E2 ubiquitin-conjugating enzyme]-L-cysteine + N(6)-ubiquitinyl-[acceptor protein]-L-lysine.. It functions in the pathway protein modification; protein ubiquitination. Functionally, has E3 ubiquitin-protein ligase activity. In the absence of an external substrate, it can catalyze self-ubiquitination. Acts as a scaffold protein that contributes to the effective activation of the JNK signaling pathway. This Xenopus tropicalis (Western clawed frog) protein is E3 ubiquitin-protein ligase SH3RF1 (sh3rf1).